Here is a 195-residue protein sequence, read N- to C-terminus: ATP-dependent Clp protease proteolytic subunit (195 aa).

The active-site Nucleophile is the S98. H123 is an active-site residue.

The protein belongs to the peptidase S14 family. As to quaternary structure, fourteen ClpP subunits assemble into 2 heptameric rings which stack back to back to give a disk-like structure with a central cavity, resembling the structure of eukaryotic proteasomes.

It localises to the cytoplasm. The enzyme catalyses Hydrolysis of proteins to small peptides in the presence of ATP and magnesium. alpha-casein is the usual test substrate. In the absence of ATP, only oligopeptides shorter than five residues are hydrolyzed (such as succinyl-Leu-Tyr-|-NHMec, and Leu-Tyr-Leu-|-Tyr-Trp, in which cleavage of the -Tyr-|-Leu- and -Tyr-|-Trp bonds also occurs).. Cleaves peptides in various proteins in a process that requires ATP hydrolysis. Has a chymotrypsin-like activity. Plays a major role in the degradation of misfolded proteins. The protein is ATP-dependent Clp protease proteolytic subunit of Wolinella succinogenes (strain ATCC 29543 / DSM 1740 / CCUG 13145 / JCM 31913 / LMG 7466 / NCTC 11488 / FDC 602W) (Vibrio succinogenes).